Here is a 369-residue protein sequence, read N- to C-terminus: Glycine oxidase (369 aa).

FAD contacts are provided by residues 14–15 (II), 34–35 (ES), 42–43 (TT), 47–49 (AGM), and V174. Substrate is bound by residues R302 and R329. Residue 327–333 (HFRNGIL) coordinates FAD.

It belongs to the DAO family. ThiO subfamily. As to quaternary structure, homotetramer. The cofactor is FAD.

It is found in the cytoplasm. The enzyme catalyses glycine + O2 + H2O = glyoxylate + H2O2 + NH4(+). It carries out the reaction N-ethylglycine + O2 + H2O = ethylamine + glyoxylate + H2O2. It catalyses the reaction sarcosine + O2 + H2O = methylamine + glyoxylate + H2O2. The catalysed reaction is D-alanine + O2 + H2O = pyruvate + H2O2 + NH4(+). The enzyme catalyses glyphosate + O2 + H2O = aminomethylphosphonate + glyoxylate + H2O2 + H(+). The protein operates within cofactor biosynthesis; thiamine diphosphate biosynthesis. Its activity is regulated as follows. Is competitively inhibited by glycolate. Functionally, catalyzes the FAD-dependent oxidative deamination of various amines and D-amino acids to yield the corresponding alpha-keto acids, ammonia/amine, and hydrogen peroxide. Oxidizes sarcosine (N-methylglycine), N-ethylglycine and glycine. Can also oxidize the herbicide glyphosate (N-phosphonomethylglycine). Displays lower activities on D-alanine, D-valine, D-proline and D-methionine. Does not act on L-amino acids and other D-amino acids. Is essential for thiamine biosynthesis since the oxidation of glycine catalyzed by ThiO generates the glycine imine intermediate (dehydroglycine) required for the biosynthesis of the thiazole ring of thiamine pyrophosphate. The sequence is that of Glycine oxidase from Bacillus subtilis (strain 168).